Consider the following 1175-residue polypeptide: Atrophin-1 (1175 aa).

Disordered stretches follow at residues 1-595 (MKTR…VTTS), 608-752 (SSPA…ARFN), and 770-847 (VPLE…HRPP). The short motif at 16–32 (RKKEAPGPREELRSRGR) is the Nuclear localization signal element. Positions 17-29 (KKEAPGPREELRS) are enriched in basic and acidic residues. A Phosphoserine modification is found at Ser-34. Basic and acidic residues predominate over residues 45–63 (GKAEKSRQTAKKARIEEPS). Residues Ser-77, Ser-79, Ser-101, Ser-103, and Ser-107 each carry the phosphoserine modification. Positions 108 to 128 (LDGRSINDDGSSDPRDIDQDN) are enriched in basic and acidic residues. Over residues 129 to 152 (RSTSPSIYSPGSVENDSDSSSGLS) the composition is skewed to polar residues. 2 stretches are compositionally biased toward pro residues: residues 158–174 (PYHPPPLFPPSPPPPDS) and 208–217 (GPPPGAPPTH). Low complexity-rich tracts occupy residues 240-253 (GAAASSVGAPSGGK) and 262-273 (IPISSSGASGAP). Pro residues predominate over residues 345 to 374 (PPGPEKGPTLAPSPHPLPPASSSAPGPPMR). Residues 378-396 (SSSSSSAAASSSSSSSSAS) are compositionally biased toward low complexity. Positions 416–437 (SMSVSNQPPKYTQPSLPSQAVW) are enriched in polar residues. A compositionally biased stretch (basic residues) spans 476 to 491 (THHHHQQQPQQQHHHG). Residues 503–553 (HPLESSNSHHAHPYNMSPSLGSLRPYPPGPAHLPPPHGQVSYNQAGPNGPP) are involved in binding BAIAP2. Over residues 527 to 539 (PYPPGPAHLPPPH) the composition is skewed to pro residues. Positions 547-584 (AGPNGPPVSSSNSSGSSSQASYSCSHPSSSQGPQGASY) are enriched in low complexity. Ser-617 is subject to Phosphoserine. Residue Lys-626 is modified to N6-acetyllysine. Residue Thr-638 is modified to Phosphothreonine. Ser-646 is modified (phosphoserine). A Phosphothreonine modification is found at Thr-654. Composition is skewed to pro residues over residues 693 to 703 (LPPPPAAPTTG) and 722 to 737 (PESPVPPARSPSPPPK). A Phosphoserine; by MAPK8 modification is found at Ser-724. Ser-731 and Ser-733 each carry phosphoserine. Over residues 780-824 (KRADLVEKVRREAEQRAREEKEREREREREKEREREKERELERSV) the composition is skewed to basic and acidic residues. Positions 864 to 879 (DTPALRTLSEYARPHV) are required for interaction with FAT1. Ser-881 carries the post-translational modification Phosphoserine. The tract at residues 913–932 (PAAREREREARERDLRDRLK) is disordered. Over residues 914–932 (AAREREREARERDLRDRLK) the composition is skewed to basic and acidic residues. The Nuclear export signal motif lies at 1018 to 1026 (ALGNDPLAR). Arg-1100 carries the post-translational modification Asymmetric dimethylarginine. Lys-1168 participates in a covalent cross-link: Glycyl lysine isopeptide (Lys-Gly) (interchain with G-Cter in SUMO2).

In terms of assembly, interacts with BAIAP2, WWP1, WWP2, WWP3 and RERE. Interacts (via its N-terminus) with MTG8; the interaction enhances transcriptional repression of MTG8. Interacts with PQBP1. Interacts with NR2E1; the interaction represses the transcriptional activity of NR2E1. Interacts with FAT1 (via a C-terminal domain). Phosphorylated in vitro by MAPK8/JNK1 on Ser-724. In terms of tissue distribution, widely expressed. Most abundant in the brain.

The protein resides in the cytoplasm. Its subcellular location is the perinuclear region. It localises to the cell junction. The protein localises to the nucleus. In terms of biological role, transcriptional corepressor. Corepressor of MTG8 transcriptional repression. Has some intrinsic repression activity which is independent of the number of the poly-Q repeats. Recruits NR2E1 to repress transcription. Promotes vascular smooth cell (VSMC) migration and orientation. In Mus musculus (Mouse), this protein is Atrophin-1 (Atn1).